The following is a 311-amino-acid chain: Putative ABC transporter ATP-binding protein MG467 (311 aa).

Positions 84-310 constitute an ABC transporter domain; the sequence is ITINKMWKNV…IVSNQLVRPL (227 aa). 122–129 is an ATP binding site; it reads GSSGSGKT.

Belongs to the ABC transporter superfamily.

The chain is Putative ABC transporter ATP-binding protein MG467 from Mycoplasma genitalium (strain ATCC 33530 / DSM 19775 / NCTC 10195 / G37) (Mycoplasmoides genitalium).